We begin with the raw amino-acid sequence, 75 residues long: Antimicrobial peptide Meucin-49-1 (75 aa).

A signal peptide spans 1–22 (MNKKILLVIFIVTMLIVDEVNS).

It belongs to the non-disulfide-bridged peptide (NDBP) superfamily. Long chain multifunctional peptide (group 2) family. As to expression, expressed by the venom gland.

It is found in the secreted. Functionally, antimicrobial peptide. The chain is Antimicrobial peptide Meucin-49-1 from Mesobuthus eupeus (Lesser Asian scorpion).